A 564-amino-acid chain; its full sequence is Type 2 DNA topoisomerase 6 subunit B (564 aa).

ATP-binding positions include Asn46, Asp78, 99–100 (TK), 109–116 (GQQGIGIS), and Lys471.

The protein belongs to the TOP6B family. In terms of assembly, homodimer. Heterotetramer of two Top6A and two Top6B chains.

The enzyme catalyses ATP-dependent breakage, passage and rejoining of double-stranded DNA.. In terms of biological role, relaxes both positive and negative superturns and exhibits a strong decatenase activity. This is Type 2 DNA topoisomerase 6 subunit B from Pyrococcus abyssi (strain GE5 / Orsay).